A 120-amino-acid chain; its full sequence is Large ribosomal subunit protein P3y (120 aa).

Residues 81–92 (GGAAAGGGGGGE) show a composition bias toward gly residues. Residues 81–120 (GGAAAGGGGGGEAAAATKEEEKKKEESEEEEGDFGFDLFG) are disordered. Residues 97–106 (TKEEEKKKEE) are compositionally biased toward basic and acidic residues.

The protein belongs to the eukaryotic ribosomal protein P1/P2 family.

Plays an important role in the elongation step of protein synthesis. The polypeptide is Large ribosomal subunit protein P3y (RPP3B) (Arabidopsis thaliana (Mouse-ear cress)).